A 453-amino-acid polypeptide reads, in one-letter code: MHAHVILAAGQGTRMRSRLPKVLHPLLGKPMLLYALEAALALKPERLVVVVGHGGEKVVEALEGYPVEVAWQKEQLGTAHALLQAEGLLRDFPGPFLVTQGDTPLLSPRTLEALLRRVREGAGMALLTAELPDPTGYGRILREGEEVLGNVEEKDAPPEVRAIREVNAGAYAFDGFLFQALKEVRNENAAREYYLPDLVAIYRAHGRRVLAVRGVAEEALGVNTREELARVEGVLLRRLRAEWMGKGVRMILPETIYLEPSVELAPDVTLWPGAVLKGKTRIGEGCEVGPYAVLEDTVLEPGAKVLAHTVAQGAHLHPGASAGPFARLRPGAVLMEEVHVGNFVEVKNSLLHKGVKAGHLAYLGDAEVGEGTNIGAGVITANYDGKRKHKTEIGKKAFIGSNSVLVAPVRVGDRALVGAGSVITQDVPEGALAVARERQKNLEGYALRKLGEG.

A pyrophosphorylase region spans residues 1-225 (MHAHVILAAG…AEEALGVNTR (225 aa)). UDP-N-acetyl-alpha-D-glucosamine contacts are provided by residues 7–10 (LAAG), K21, Q72, and 77–78 (GT). D102 serves as a coordination point for Mg(2+). G138, E152, N167, and N223 together coordinate UDP-N-acetyl-alpha-D-glucosamine. N223 is a binding site for Mg(2+). A linker region spans residues 226–246 (EELARVEGVLLRRLRAEWMGK). Residues 247 to 453 (GVRMILPETI…GYALRKLGEG (207 aa)) form an N-acetyltransferase region. R329 and K347 together coordinate UDP-N-acetyl-alpha-D-glucosamine. The active-site Proton acceptor is the H359. UDP-N-acetyl-alpha-D-glucosamine-binding residues include Y362 and N373. Residues A376, 382–383 (NY), S401, A419, and R436 contribute to the acetyl-CoA site.

The protein in the N-terminal section; belongs to the N-acetylglucosamine-1-phosphate uridyltransferase family. It in the C-terminal section; belongs to the transferase hexapeptide repeat family. As to quaternary structure, homotrimer. It depends on Mg(2+) as a cofactor.

The protein resides in the cytoplasm. It catalyses the reaction alpha-D-glucosamine 1-phosphate + acetyl-CoA = N-acetyl-alpha-D-glucosamine 1-phosphate + CoA + H(+). The enzyme catalyses N-acetyl-alpha-D-glucosamine 1-phosphate + UTP + H(+) = UDP-N-acetyl-alpha-D-glucosamine + diphosphate. The protein operates within nucleotide-sugar biosynthesis; UDP-N-acetyl-alpha-D-glucosamine biosynthesis; N-acetyl-alpha-D-glucosamine 1-phosphate from alpha-D-glucosamine 6-phosphate (route II): step 2/2. It functions in the pathway nucleotide-sugar biosynthesis; UDP-N-acetyl-alpha-D-glucosamine biosynthesis; UDP-N-acetyl-alpha-D-glucosamine from N-acetyl-alpha-D-glucosamine 1-phosphate: step 1/1. It participates in bacterial outer membrane biogenesis; LPS lipid A biosynthesis. Its function is as follows. Catalyzes the last two sequential reactions in the de novo biosynthetic pathway for UDP-N-acetylglucosamine (UDP-GlcNAc). The C-terminal domain catalyzes the transfer of acetyl group from acetyl coenzyme A to glucosamine-1-phosphate (GlcN-1-P) to produce N-acetylglucosamine-1-phosphate (GlcNAc-1-P), which is converted into UDP-GlcNAc by the transfer of uridine 5-monophosphate (from uridine 5-triphosphate), a reaction catalyzed by the N-terminal domain. The protein is Bifunctional protein GlmU of Thermus thermophilus (strain ATCC BAA-163 / DSM 7039 / HB27).